Consider the following 338-residue polypeptide: Glycerol-3-phosphate dehydrogenase [NAD(P)+] (338 aa).

NADPH-binding residues include serine 13, tryptophan 14, and lysine 108. Sn-glycerol 3-phosphate contacts are provided by lysine 108, glycine 139, and serine 141. Alanine 143 lines the NADPH pocket. The sn-glycerol 3-phosphate site is built by lysine 194, aspartate 247, serine 257, arginine 258, and asparagine 259. Catalysis depends on lysine 194, which acts as the Proton acceptor. Arginine 258 is an NADPH binding site. NADPH contacts are provided by valine 282 and glutamate 284.

It belongs to the NAD-dependent glycerol-3-phosphate dehydrogenase family.

The protein resides in the cytoplasm. It catalyses the reaction sn-glycerol 3-phosphate + NAD(+) = dihydroxyacetone phosphate + NADH + H(+). The enzyme catalyses sn-glycerol 3-phosphate + NADP(+) = dihydroxyacetone phosphate + NADPH + H(+). The protein operates within membrane lipid metabolism; glycerophospholipid metabolism. In terms of biological role, catalyzes the reduction of the glycolytic intermediate dihydroxyacetone phosphate (DHAP) to sn-glycerol 3-phosphate (G3P), the key precursor for phospholipid synthesis. This is Glycerol-3-phosphate dehydrogenase [NAD(P)+] from Listeria monocytogenes serotype 4a (strain HCC23).